Here is a 213-residue protein sequence, read N- to C-terminus: MFTLRELPFAKDSMGDFLSPVAFDFHHGKHHQTYVNNLNNLIKGTDFEKSSLFDILTKSSGGVFNNAAQIYNHDFYWDCLSPKATALSDELKGALEKDFGSLEKFKEDFIKSATTLFGSGWNWAAYNLDTQKIEIIQTSNAQTPVTDKKVPLLVVDVWEHAYYIDHKNARPVYLEKFYGHINWHFVSQCYEWAKKEGLGSVDYYINELVHKKA.

Positions 26, 73, 156, and 160 each coordinate Fe cation.

Belongs to the iron/manganese superoxide dismutase family. Homodimer. The cofactor is Fe cation.

The enzyme catalyses 2 superoxide + 2 H(+) = H2O2 + O2. Its function is as follows. Destroys superoxide anion radicals which are normally produced within the cells and which are toxic to biological systems. This Helicobacter pylori (strain ATCC 700392 / 26695) (Campylobacter pylori) protein is Superoxide dismutase [Fe] (sodB).